Consider the following 335-residue polypeptide: Ferredoxin--NADP reductase (335 aa).

Residues aspartate 35, glutamine 43, tyrosine 48, alanine 88, phenylalanine 122, aspartate 287, and serine 328 each contribute to the FAD site.

Belongs to the ferredoxin--NADP reductase type 2 family. As to quaternary structure, homodimer. Requires FAD as cofactor.

It carries out the reaction 2 reduced [2Fe-2S]-[ferredoxin] + NADP(+) + H(+) = 2 oxidized [2Fe-2S]-[ferredoxin] + NADPH. In Thermus thermophilus (strain ATCC BAA-163 / DSM 7039 / HB27), this protein is Ferredoxin--NADP reductase.